Reading from the N-terminus, the 251-residue chain is 1-(5-phosphoribosyl)-5-[(5-phosphoribosylamino)methylideneamino] imidazole-4-carboxamide isomerase (251 aa).

Catalysis depends on aspartate 8, which acts as the Proton acceptor. Aspartate 131 acts as the Proton donor in catalysis.

This sequence belongs to the HisA/HisF family.

It is found in the cytoplasm. The catalysed reaction is 1-(5-phospho-beta-D-ribosyl)-5-[(5-phospho-beta-D-ribosylamino)methylideneamino]imidazole-4-carboxamide = 5-[(5-phospho-1-deoxy-D-ribulos-1-ylimino)methylamino]-1-(5-phospho-beta-D-ribosyl)imidazole-4-carboxamide. It functions in the pathway amino-acid biosynthesis; L-histidine biosynthesis; L-histidine from 5-phospho-alpha-D-ribose 1-diphosphate: step 4/9. This Thiobacillus denitrificans (strain ATCC 25259 / T1) protein is 1-(5-phosphoribosyl)-5-[(5-phosphoribosylamino)methylideneamino] imidazole-4-carboxamide isomerase.